The primary structure comprises 175 residues: Translation initiation factor IF-3 (175 aa).

The protein belongs to the IF-3 family. In terms of assembly, monomer.

The protein localises to the cytoplasm. Its function is as follows. IF-3 binds to the 30S ribosomal subunit and shifts the equilibrium between 70S ribosomes and their 50S and 30S subunits in favor of the free subunits, thus enhancing the availability of 30S subunits on which protein synthesis initiation begins. This Staphylococcus epidermidis (strain ATCC 35984 / DSM 28319 / BCRC 17069 / CCUG 31568 / BM 3577 / RP62A) protein is Translation initiation factor IF-3.